A 170-amino-acid polypeptide reads, in one-letter code: Lipoprotein signal peptidase (170 aa).

The next 3 helical transmembrane spans lie at 12–32 (WYWI…WVLS), 67–87 (WQRW…SVWL), and 94–113 (MWRL…GNLI). Residues D123 and D141 contribute to the active site. A helical transmembrane segment spans residues 133 to 153 (HFPAFNIADSAICIGAGLIIL).

It belongs to the peptidase A8 family.

The protein localises to the cell inner membrane. The enzyme catalyses Release of signal peptides from bacterial membrane prolipoproteins. Hydrolyzes -Xaa-Yaa-Zaa-|-(S,diacylglyceryl)Cys-, in which Xaa is hydrophobic (preferably Leu), and Yaa (Ala or Ser) and Zaa (Gly or Ala) have small, neutral side chains.. Its pathway is protein modification; lipoprotein biosynthesis (signal peptide cleavage). Functionally, this protein specifically catalyzes the removal of signal peptides from prolipoproteins. This chain is Lipoprotein signal peptidase, found in Shewanella piezotolerans (strain WP3 / JCM 13877).